A 105-amino-acid polypeptide reads, in one-letter code: Small ribosomal subunit protein uS10 (105 aa).

Belongs to the universal ribosomal protein uS10 family. Part of the 30S ribosomal subunit.

Involved in the binding of tRNA to the ribosomes. The protein is Small ribosomal subunit protein uS10 of Trichodesmium erythraeum (strain IMS101).